We begin with the raw amino-acid sequence, 296 residues long: Fructose-bisphosphate aldolase class 1 (296 aa).

Glu175 acts as the Proton acceptor in catalysis. The active-site Schiff-base intermediate with dihydroxyacetone-P is the Lys212.

This sequence belongs to the class I fructose-bisphosphate aldolase family.

It carries out the reaction beta-D-fructose 1,6-bisphosphate = D-glyceraldehyde 3-phosphate + dihydroxyacetone phosphate. It functions in the pathway carbohydrate degradation; glycolysis; D-glyceraldehyde 3-phosphate and glycerone phosphate from D-glucose: step 4/4. The sequence is that of Fructose-bisphosphate aldolase class 1 from Staphylococcus aureus (strain MRSA252).